Here is a 351-residue protein sequence, read N- to C-terminus: Probable inactive tRNA-specific adenosine deaminase-like protein 3 (351 aa).

Met1 carries the post-translational modification N-acetylmethionine. The segment at 1 to 26 is disordered; sequence MEPAPGLVEQPKCLEAGSPEPEPAPW. Positions 171-336 constitute a CMP/dCMP-type deaminase domain; that stretch reads AAMQSHMERA…PDLNHRFQVF (166 aa). Zn(2+)-binding residues include His223, Cys291, and Cys294.

The protein belongs to the cytidine and deoxycytidylate deaminase family. ADAT3 subfamily. Zn(2+) is required as a cofactor.

In Homo sapiens (Human), this protein is Probable inactive tRNA-specific adenosine deaminase-like protein 3 (ADAT3).